The following is a 252-amino-acid chain: Serine/threonine phosphatase stp (252 aa).

The segment covering 1–18 (MHAEFRTDRGRIRHHNED) has biased composition (basic and acidic residues). The tract at residues 1-23 (MHAEFRTDRGRIRHHNEDNGGVF) is disordered. The 241-residue stretch at 2–242 (HAEFRTDRGR…DNITVLLVER (241 aa)) folds into the PPM-type phosphatase domain. Residues D36, G37, D194, and D233 each contribute to the Mn(2+) site.

The protein belongs to the PP2C family. Mn(2+) serves as cofactor.

The protein resides in the cytoplasm. Its subcellular location is the membrane. It catalyses the reaction O-phospho-L-seryl-[protein] + H2O = L-seryl-[protein] + phosphate. The catalysed reaction is O-phospho-L-threonyl-[protein] + H2O = L-threonyl-[protein] + phosphate. Activity not affected by inhibitors of phosphatases of the PPP family such as okadaic acid and cypermethrin, or by inhibitors of phosphatases of the PTP family such as sodium orthovanadate. Its function is as follows. Protein phosphatase that dephosphorylates EF-Tu. The polypeptide is Serine/threonine phosphatase stp (stp) (Listeria monocytogenes serovar 1/2a (strain ATCC BAA-679 / EGD-e)).